The sequence spans 321 residues: Quinol oxidase subunit 2 (321 aa).

A signal peptide spans 1–25 (MIFLFRALKPLLVLALLTVVFVLGG). The N-palmitoyl cysteine moiety is linked to residue C26. A lipid anchor (S-diacylglycerol cysteine) is attached at C26. 2 helical membrane passes run 49–69 (SIGF…IILV) and 90–110 (TFLE…LSVP). The interval 294–321 (QAVSPHSKTDPFENVKKNEFKKSDDTEE) is disordered. The span at 300–321 (SKTDPFENVKKNEFKKSDDTEE) shows a compositional bias: basic and acidic residues.

It belongs to the cytochrome c oxidase subunit 2 family. Interacts with FloT.

It localises to the cell membrane. It is found in the membrane raft. The enzyme catalyses 2 a quinol + O2 = 2 a quinone + 2 H2O. Catalyzes quinol oxidation with the concomitant reduction of oxygen to water. Major component for energy conversion during vegetative growth. Subunit II transfers the electrons from a quinol to the binuclear center of the catalytic subunit I. The protein is Quinol oxidase subunit 2 (qoxA) of Bacillus subtilis (strain 168).